The primary structure comprises 371 residues: Aminomethyltransferase (371 aa).

It belongs to the GcvT family. As to quaternary structure, the glycine cleavage system is composed of four proteins: P, T, L and H.

It carries out the reaction N(6)-[(R)-S(8)-aminomethyldihydrolipoyl]-L-lysyl-[protein] + (6S)-5,6,7,8-tetrahydrofolate = N(6)-[(R)-dihydrolipoyl]-L-lysyl-[protein] + (6R)-5,10-methylene-5,6,7,8-tetrahydrofolate + NH4(+). The glycine cleavage system catalyzes the degradation of glycine. The sequence is that of Aminomethyltransferase from Leptospira interrogans serogroup Icterohaemorrhagiae serovar Lai (strain 56601).